A 107-amino-acid chain; its full sequence is Large ribosomal subunit protein uL24 (107 aa).

This sequence belongs to the universal ribosomal protein uL24 family. As to quaternary structure, part of the 50S ribosomal subunit.

Its function is as follows. One of two assembly initiator proteins, it binds directly to the 5'-end of the 23S rRNA, where it nucleates assembly of the 50S subunit. In terms of biological role, one of the proteins that surrounds the polypeptide exit tunnel on the outside of the subunit. This chain is Large ribosomal subunit protein uL24, found in Caldanaerobacter subterraneus subsp. tengcongensis (strain DSM 15242 / JCM 11007 / NBRC 100824 / MB4) (Thermoanaerobacter tengcongensis).